Reading from the N-terminus, the 170-residue chain is ATP synthase subunit b (170 aa).

Residues 30-50 traverse the membrane as a helical segment; it reads FFFVLAIFLVVLAVIGTFVVP.

The protein belongs to the ATPase B chain family. As to quaternary structure, F-type ATPases have 2 components, F(1) - the catalytic core - and F(0) - the membrane proton channel. F(1) has five subunits: alpha(3), beta(3), gamma(1), delta(1), epsilon(1). F(0) has three main subunits: a(1), b(2) and c(10-14). The alpha and beta chains form an alternating ring which encloses part of the gamma chain. F(1) is attached to F(0) by a central stalk formed by the gamma and epsilon chains, while a peripheral stalk is formed by the delta and b chains.

It localises to the cell membrane. Functionally, f(1)F(0) ATP synthase produces ATP from ADP in the presence of a proton or sodium gradient. F-type ATPases consist of two structural domains, F(1) containing the extramembraneous catalytic core and F(0) containing the membrane proton channel, linked together by a central stalk and a peripheral stalk. During catalysis, ATP synthesis in the catalytic domain of F(1) is coupled via a rotary mechanism of the central stalk subunits to proton translocation. Component of the F(0) channel, it forms part of the peripheral stalk, linking F(1) to F(0). The sequence is that of ATP synthase subunit b from Mycobacterium marinum (strain ATCC BAA-535 / M).